The chain runs to 620 residues: Glutathione-regulated potassium-efflux system protein KefC (620 aa).

Helical transmembrane passes span 4 to 24, 26 to 46, 54 to 74, 86 to 106, 114 to 134, 149 to 169, 178 to 198, 218 to 238, 271 to 291, 296 to 316, 326 to 346, and 359 to 379; these read HTLIQALIYLGSAALIVPVAV, LGLGSVLGYLIAGGLIGPWGL, AILHFAEIGVVLMLFVIGLEL, VFGGGALQMGACGLLLGGFCV, VALLIGLTLALSSTAIAMQAM, FAVLLFQDIAAIPLVAMIPLL, ASAFFLSALKVVGALALVVLL, VFSAVALFLVFGFGLLLEEAG, LLLGLFFIGVGMSIDFGTLVA, VLTLLFGFLIIKTVTLWLVAK, RWFAVLLGQGSEFAFVIFGAA, and ALTLAVALSMAATPLLLVLLT. The RCK N-terminal domain maps to 399–518; sequence QPRVIIAGFG…AGVAQPERET (120 aa). The disordered stretch occupies residues 596-620; that stretch reads HGWQGTREGKHTGNDADEPEVKPQP.

It belongs to the monovalent cation:proton antiporter 2 (CPA2) transporter (TC 2.A.37) family. KefC subfamily. In terms of assembly, homodimer. Interacts with the regulatory subunit KefF.

It is found in the cell inner membrane. In terms of biological role, pore-forming subunit of a potassium efflux system that confers protection against electrophiles. Catalyzes K(+)/H(+) antiport. This Cronobacter sakazakii (strain ATCC BAA-894) (Enterobacter sakazakii) protein is Glutathione-regulated potassium-efflux system protein KefC.